The following is a 420-amino-acid chain: Xyloglucan O-acetyltransferase 4 (420 aa).

Over 1–30 (MTMHEKMKLPSCSCSAFKCGKKDRWLNMER) the chain is Cytoplasmic. A helical; Signal-anchor for type II membrane protein transmembrane segment spans residues 31 to 51 (PIPFLLIGLTTILSVFILYTL). Over 52–420 (NPLKFVIEHN…LLLAVLRRLD (369 aa)) the chain is Lumenal. 4 disulfide bridges follow: C78–C128, C99–C164, C108–C400, and C323–C396. A glycan (N-linked (GlcNAc...) asparagine) is linked at N96. Positions 151-153 (GDS) match the GDS motif motif. S153 acts as the Nucleophile in catalysis. N192, N212, N270, and N324 each carry an N-linked (GlcNAc...) asparagine glycan. The active-site Proton donor is D395. Positions 395-398 (DCVH) match the DXXH motif motif. The active-site Proton acceptor is the H398.

The protein belongs to the PC-esterase family. TBL subfamily.

It is found in the golgi apparatus membrane. Functionally, xyloglucan acetyltransferase that catalyzes the acetylation of fucosylated Gal residues on xyloglucan side chains. Predominantly catalyze 6-O-monoacetylation of Gal residues in the Fuc-Gal-Xyl trisaccharide side chains of xyloglucan oligomers. This is Xyloglucan O-acetyltransferase 4 from Populus trichocarpa (Western balsam poplar).